A 270-amino-acid chain; its full sequence is Putative hydro-lyase Noca_0093 (270 aa).

The protein belongs to the D-glutamate cyclase family.

The protein is Putative hydro-lyase Noca_0093 of Nocardioides sp. (strain ATCC BAA-499 / JS614).